The primary structure comprises 677 residues: Methionine--tRNA ligase (677 aa).

The 'HIGH' region motif lies at 15-25; that stretch reads PYANGSIHLGH. Zn(2+) is bound by residues cysteine 146, cysteine 149, cysteine 159, and cysteine 162. The 'KMSKS' region motif lies at 333–337; the sequence is KMSKS. Position 336 (lysine 336) interacts with ATP. In terms of domain architecture, tRNA-binding spans 575 to 677; the sequence is DFAKVDLRVA…AGAKPGHQVK (103 aa).

The protein belongs to the class-I aminoacyl-tRNA synthetase family. MetG type 1 subfamily. Homodimer. Requires Zn(2+) as cofactor.

The protein resides in the cytoplasm. It catalyses the reaction tRNA(Met) + L-methionine + ATP = L-methionyl-tRNA(Met) + AMP + diphosphate. In terms of biological role, is required not only for elongation of protein synthesis but also for the initiation of all mRNA translation through initiator tRNA(fMet) aminoacylation. The protein is Methionine--tRNA ligase of Escherichia fergusonii (strain ATCC 35469 / DSM 13698 / CCUG 18766 / IAM 14443 / JCM 21226 / LMG 7866 / NBRC 102419 / NCTC 12128 / CDC 0568-73).